Consider the following 135-residue polypeptide: Large ribosomal subunit protein uL16c (135 aa).

Belongs to the universal ribosomal protein uL16 family. In terms of assembly, part of the 50S ribosomal subunit.

It localises to the plastid. The protein resides in the chloroplast. In Stigeoclonium helveticum (Green alga), this protein is Large ribosomal subunit protein uL16c.